The primary structure comprises 1032 residues: Contactin-1a (1032 aa).

Residues 1–31 form the signal peptide; sequence MIPEAFQPRAMKHTTTVLMLALSSRFWSVCA. 6 consecutive Ig-like C2-type domains span residues 46–139, 144–231, 249–335, 340–417, 423–510, and 515–612; these read PVFE…ARVQ, DMFS…KSVF, PADI…THLY, PDWL…AELR, PSFQ…GSLS, and TKIT…AELV. 2 disulfides stabilise this stretch: C70–C122 and C166–C219. N-linked (GlcNAc...) asparagine glycans are attached at residues N119, N216, and N266. Intrachain disulfides connect C271–C319, C361–C401, and C446–C494. Residues N455, N467, N483, and N504 are each glycosylated (N-linked (GlcNAc...) asparagine). Cysteines 536 and 596 form a disulfide. The N-linked (GlcNAc...) asparagine glycan is linked to N604. 4 Fibronectin type-III domains span residues 619 to 718, 723 to 820, 825 to 918, and 920 to 1015; these read PPGG…TREA, APSD…SAQD, APII…TKKS, and PSRP…APAP. The tract at residues 699-729 is disordered; sequence NTLGTGPPSEPSPKTTTREARPIVAPSDIGG. Residue N879 is glycosylated (N-linked (GlcNAc...) asparagine). Residues 907 to 926 form a disordered region; sequence ASQRNRIYTKKSPPSRPPKI. N950 carries N-linked (GlcNAc...) asparagine glycosylation. The GPI-anchor amidated glycine moiety is linked to residue G1010. Residues 1011-1032 constitute a propeptide, removed in mature form; the sequence is SAPAPALASALLLLPLLWTLML.

It belongs to the immunoglobulin superfamily. Contactin family. Expressed in brain.

The protein localises to the cell membrane. Functionally, mediates cell surface interactions during nervous system development. The protein is Contactin-1a (cntn1a) of Danio rerio (Zebrafish).